The following is a 441-amino-acid chain: tRNA (guanine(37)-N(1))-methyltransferase (441 aa).

The transit peptide at 1–9 (MFAPPAARA) directs the protein to the mitochondrion. Residues Arg-221, 248–249 (DL), 276–277 (DG), and Asn-331 contribute to the S-adenosyl-L-methionine site.

This sequence belongs to the class I-like SAM-binding methyltransferase superfamily. TRM5/TYW2 family. In terms of assembly, monomer.

It localises to the mitochondrion matrix. The protein resides in the nucleus. The protein localises to the cytoplasm. It catalyses the reaction guanosine(37) in tRNA + S-adenosyl-L-methionine = N(1)-methylguanosine(37) in tRNA + S-adenosyl-L-homocysteine + H(+). In terms of biological role, specifically methylates the N1 position of guanosine-37 in various cytoplasmic and mitochondrial tRNAs. Methylation is not dependent on the nature of the nucleoside 5' of the target nucleoside. This is the first step in the biosynthesis of wybutosine (yW), a modified base adjacent to the anticodon of tRNAs and required for accurate decoding. In Phaeosphaeria nodorum (strain SN15 / ATCC MYA-4574 / FGSC 10173) (Glume blotch fungus), this protein is tRNA (guanine(37)-N(1))-methyltransferase.